We begin with the raw amino-acid sequence, 417 residues long: RH-like protein IIR (417 aa).

11 consecutive transmembrane segments (helical) span residues 12-32, 44-64, 77-97, 125-145, 172-192, 203-223, 238-258, 265-285, 287-307, 331-351, and 358-378; these read CLPL…YFFT, LVAS…GFGF, VAFS…LDGF, ISVD…MVLV, IYVF…KPLP, TIPS…WPSF, VFNT…GSSL, ISMS…GTSC, LIPS…ISVG, NFSW…VRHT, and MIGF…TIAL.

Belongs to the ammonium transporter (TC 2.A.49) family. Rh subfamily.

It is found in the membrane. May be part of an oligomeric complex which is likely to have a transport or channel function in the erythrocyte membrane. The protein is RH-like protein IIR of Pan troglodytes (Chimpanzee).